The chain runs to 327 residues: Glycerol-3-phosphate dehydrogenase [NAD(P)+] (327 aa).

Residues F14, R35, and K108 each coordinate NADPH. K108 and G136 together coordinate sn-glycerol 3-phosphate. A140 serves as a coordination point for NADPH. Sn-glycerol 3-phosphate is bound by residues K191, D244, S254, R255, and N256. The Proton acceptor role is filled by K191. R255 contacts NADPH. NADPH contacts are provided by L275 and E277.

This sequence belongs to the NAD-dependent glycerol-3-phosphate dehydrogenase family.

Its subcellular location is the cytoplasm. The enzyme catalyses sn-glycerol 3-phosphate + NAD(+) = dihydroxyacetone phosphate + NADH + H(+). It carries out the reaction sn-glycerol 3-phosphate + NADP(+) = dihydroxyacetone phosphate + NADPH + H(+). The protein operates within membrane lipid metabolism; glycerophospholipid metabolism. Its function is as follows. Catalyzes the reduction of the glycolytic intermediate dihydroxyacetone phosphate (DHAP) to sn-glycerol 3-phosphate (G3P), the key precursor for phospholipid synthesis. This Agrobacterium fabrum (strain C58 / ATCC 33970) (Agrobacterium tumefaciens (strain C58)) protein is Glycerol-3-phosphate dehydrogenase [NAD(P)+].